We begin with the raw amino-acid sequence, 154 residues long: Putative pre-16S rRNA nuclease (154 aa).

The protein belongs to the YqgF nuclease family.

It is found in the cytoplasm. Functionally, could be a nuclease involved in processing of the 5'-end of pre-16S rRNA. This Rickettsia rickettsii (strain Iowa) protein is Putative pre-16S rRNA nuclease.